The sequence spans 427 residues: Glutamate-1-semialdehyde 2,1-aminomutase (427 aa).

Lys265 carries the N6-(pyridoxal phosphate)lysine modification.

This sequence belongs to the class-III pyridoxal-phosphate-dependent aminotransferase family. HemL subfamily. As to quaternary structure, homodimer. Requires pyridoxal 5'-phosphate as cofactor.

Its subcellular location is the cytoplasm. It catalyses the reaction (S)-4-amino-5-oxopentanoate = 5-aminolevulinate. Its pathway is porphyrin-containing compound metabolism; protoporphyrin-IX biosynthesis; 5-aminolevulinate from L-glutamyl-tRNA(Glu): step 2/2. This Burkholderia pseudomallei (strain 668) protein is Glutamate-1-semialdehyde 2,1-aminomutase.